A 402-amino-acid polypeptide reads, in one-letter code: FMN-dependent alpha-hydroxy acid dehydrogenase qulF (402 aa).

One can recognise an FMN hydroxy acid dehydrogenase domain in the interval 22–394 (RLPAITTNPT…NRDCMRRISY (373 aa)). Tyr-48 serves as a coordination point for a 2-oxocarboxylate. The FMN site is built by Ser-130 and Gln-152. Positions 154 and 189 each coordinate a 2-oxocarboxylate. Lys-265 lines the FMN pocket. His-289 acts as the Proton acceptor in catalysis. Residue Arg-292 coordinates a 2-oxocarboxylate. FMN contacts are provided by residues 320–324 (DSGVR) and 343–344 (GR).

Belongs to the FMN-dependent alpha-hydroxy acid dehydrogenase family. Requires FMN as cofactor.

FMN-dependent alpha-hydroxy acid dehydrogenase; part of the gene cluster that mediates the biosynthesis of quinolactacin A2 (QUL A2), a fungal alkaloid that features a quinolone-gamma-lactam hybrid, which is a potential pharmacophore for the treatment of cancer and Alzheimer's disease. The quinolone-gamma-lactam hybrid scaffold is synthesized from the combination of L-isoleucine (L-Ile) and the nonproteinogenic amino acid L-kynurenine, followed by quinolone cyclization, oxidative decarboxylation, and lactam formation. Additionally, the N-methyl group is derived from methionine, which might be catalyzed by an S-adenosylmethionine (SAM)-dependent methyltransferase. Bioconversion of L-tryptophan to L-kynurenine could be catalyzed by the indoleamine-2,3-dioxygenase (IDO) qulI to produce an unstable product, N-formyl-L-kynurenine, followed by kynurenine formamidase catalyzed hydrolysis. QulM then acts as a methyltransferase that methylates L-kynurenine at the N-4 position. The FMN-dependent alpha-hydroxy acid dehydrogenase qulF than functions as an oxidative decarboxylase which converts N-methylkynurenine into 2-aminobenzoylacetamide via 2 tandem reactions, including dehydrogenation and decarboxylation. An amidase located outside of the qul gene cluster further produces the unstable beta-keto acid precursor N-methyl-2-aminobenzoylacetate, which could be spontaneously dehydrated to form N-methyl-4-hydroxy-2-quinolone. The NRPS qulB is able to incorporate N-methyl-2-aminobenzoylacetate and efficiently compete with the spontaneous reaction. By further extending the beta-keto acid with L-Ile, qulA performs a Dieckmann condensation to form the gamma-lactam ring and release a 4-ketopyrrolidinone intermediate from the assembly line. This intermediate could plausibly further undergo a spontaneous cyclization to yield the final quinolone-gamma-lactam hybrid structure. The sequence is that of FMN-dependent alpha-hydroxy acid dehydrogenase qulF from Penicillium citrinum.